The following is a 637-amino-acid chain: Zinc finger protein rsv2 (637 aa).

Disordered regions lie at residues 1 to 41 (MDTT…SKMN), 145 to 164 (SNHQ…PTSA), 169 to 207 (IITA…QPFS), 221 to 363 (TGAI…STAL), 404 to 427 (QDSF…TRSY), and 440 to 558 (SVNP…GAQR). Residues 172–189 (ANSSPSGNAGSNASASMS) show a composition bias toward low complexity. Over residues 196–207 (PSASTINDQPFS) the composition is skewed to polar residues. The span at 279-296 (SDLKRSLGHNQKSDRVSK) shows a compositional bias: basic and acidic residues. Polar residues predominate over residues 298-344 (VSPQHQANPSTLNNPLKTQNFDSSKNLYTDNKDSSLVSPTGLQSRME). 2 stretches are compositionally biased toward basic and acidic residues: residues 345-355 (QNPEVRAHPMK) and 404-413 (QDSFNKESIK). Positions 455 to 471 (VPSNTTISSSPPLTSPV) are enriched in low complexity. 2 stretches are compositionally biased toward polar residues: residues 472–498 (KTSA…QSAA) and 508–527 (YYNT…QKVS). Low complexity predominate over residues 544-554 (TTPTNSSTTAT). A C2H2-type 1 zinc finger spans residues 572–603 (VRCTLQNRVTGEICNTVFSRTYDLIRHQDTIH). The C2H2-type 2; degenerate zinc finger occupies 610–635 (FRCEICGDQRHFSRHDALVRHLRVKH).

The protein localises to the nucleus. In Schizosaccharomyces pombe (strain 972 / ATCC 24843) (Fission yeast), this protein is Zinc finger protein rsv2 (rsv2).